Here is a 206-residue protein sequence, read N- to C-terminus: LexA repressor (206 aa).

The segment at residues 28–48 (VREIGEAVGLASSSTVHGHLS) is a DNA-binding region (H-T-H motif). Residues S129 and K167 each act as for autocatalytic cleavage activity in the active site.

The protein belongs to the peptidase S24 family. In terms of assembly, homodimer.

It catalyses the reaction Hydrolysis of Ala-|-Gly bond in repressor LexA.. In terms of biological role, represses a number of genes involved in the response to DNA damage (SOS response), including recA and lexA. In the presence of single-stranded DNA, RecA interacts with LexA causing an autocatalytic cleavage which disrupts the DNA-binding part of LexA, leading to derepression of the SOS regulon and eventually DNA repair. This is LexA repressor from Staphylococcus epidermidis (strain ATCC 35984 / DSM 28319 / BCRC 17069 / CCUG 31568 / BM 3577 / RP62A).